Reading from the N-terminus, the 659-residue chain is Zinc finger protein 304 (659 aa).

In terms of domain architecture, KRAB spans 14 to 88 (VTFEDVFVYF…TAESGLFQKA (75 aa)). 16 consecutive C2H2-type zinc fingers follow at residues 89 to 111 (HPCE…QGSH), 115 to 139 (KLCT…QKQH), 251 to 273 (FRCL…RKIH), 279 to 301 (HVCK…QKFH), 307 to 329 (YTCS…QRVH), 335 to 357 (YDCS…QRIH), 363 to 385 (YKCN…QRFH), 391 to 413 (YECS…WRIH), 419 to 441 (YECI…RRVH), 447 to 469 (YVCS…QIIH), 475 to 497 (YECS…QKIH), 503 to 525 (YECG…QRIH), 531 to 553 (YECN…QRVH), 559 to 581 (YVCS…KKVH), 587 to 609 (YECS…QRVH), and 615 to 637 (YVCS…QKAH).

This sequence belongs to the krueppel C2H2-type zinc-finger protein family. As to quaternary structure, probably part of a corepressor complex containing ZNF304, TRIM28, SETDB1 and DNMT1; leading to promoter hypermethylation and transcriptional silencing. Probably associates with Polycomb group (PcG) complexes; leading to trimethylation of 'Lys-27' of histone H3 (H3K27me3). Interacts with USP28. Post-translationally, deubiquitinated by USP28; the deubiquitination leads to the stabilization of ZNF304 from proteolytic degradation. In terms of tissue distribution, expressed in undifferentiated embryonic stem cells (ESCs). Expressed strongly in colorectal cancers cells (CRCs). Expressed strongly in ovarian carcinoma (OC) tumor cell lines compared to non-transformed ovarian epithelial cells (at protein level). Expressed in lymphoid tissues, thyroid, adrenal gland, prostate, pancreas and skeletal muscles.

The protein resides in the nucleus. Its function is as follows. Acts as a transcriptional regulator and plays a role in gene silencing. Probably forms a corepressor complex required for activated KRAS-mediated promoter hypermethylation and transcriptional silencing of several tumor suppressor genes (TSGs) or other tumor-related genes in colorectal cancer (CRC) cells. Also required to maintain a transcriptionally repressive state of genes in undifferentiated embryonic stem cells (ESCs) by inducing trimethylation of 'Lys-27' of histone H3 (H3K27me3) in a Polycomb group (PcG) complexes-dependent manner. Associates at promoter regions of TSGs and mediates the recruitment of the corepressor complex containing the scaffolding protein TRIM28, methyltransferase DNMT1 and histone methyltransferase SETDB1 and/or the PcG complexes at those sites. Transcription factor involved in the metastatic cascade process by inducing cell migration and proliferation and gain resistance to anoikis of ovarian carcinoma (OC) cells via integrin-mediated signaling pathways. Associates with the ITGB1 promoter and positively regulates beta-1 integrin transcription expression. Promotes angiogenesis. Promotes tumor growth. This is Zinc finger protein 304 from Homo sapiens (Human).